Here is a 316-residue protein sequence, read N- to C-terminus: Acetyl-coenzyme A carboxylase carboxyl transferase subunit beta (316 aa).

The 270-residue stretch at 39–308 (LWHKCSKCGV…TPPMVLWETM (270 aa)) folds into the CoA carboxyltransferase N-terminal domain. Zn(2+)-binding residues include cysteine 43, cysteine 46, cysteine 62, and cysteine 65. The segment at 43–65 (CSKCGVLTYTKDLRANQMVCVEC) adopts a C4-type zinc-finger fold.

It belongs to the AccD/PCCB family. As to quaternary structure, acetyl-CoA carboxylase is a heterohexamer composed of biotin carboxyl carrier protein (AccB), biotin carboxylase (AccC) and two subunits each of ACCase subunit alpha (AccA) and ACCase subunit beta (AccD). Zn(2+) is required as a cofactor.

It localises to the cytoplasm. The enzyme catalyses N(6)-carboxybiotinyl-L-lysyl-[protein] + acetyl-CoA = N(6)-biotinyl-L-lysyl-[protein] + malonyl-CoA. It functions in the pathway lipid metabolism; malonyl-CoA biosynthesis; malonyl-CoA from acetyl-CoA: step 1/1. Functionally, component of the acetyl coenzyme A carboxylase (ACC) complex. Biotin carboxylase (BC) catalyzes the carboxylation of biotin on its carrier protein (BCCP) and then the CO(2) group is transferred by the transcarboxylase to acetyl-CoA to form malonyl-CoA. In Nostoc sp. (strain PCC 7120 / SAG 25.82 / UTEX 2576), this protein is Acetyl-coenzyme A carboxylase carboxyl transferase subunit beta.